The following is a 490-amino-acid chain: Cytochrome P450 2C26 (490 aa).

Cys435 provides a ligand contact to heme.

The protein belongs to the cytochrome P450 family. It depends on heme as a cofactor.

The protein localises to the endoplasmic reticulum membrane. It localises to the microsome membrane. It catalyses the reaction an organic molecule + reduced [NADPH--hemoprotein reductase] + O2 = an alcohol + oxidized [NADPH--hemoprotein reductase] + H2O + H(+). Catalyzes the hydroxylation of tolbutamide and the N-demethylation of aminopyrine and benzphetamine. This chain is Cytochrome P450 2C26 (CYP2C26), found in Mesocricetus auratus (Golden hamster).